An 851-amino-acid polypeptide reads, in one-letter code: Glycogen phosphorylase, liver form (851 aa).

Ala2 carries the post-translational modification N-acetylalanine. Ser15 is subject to Phosphoserine; by PHK; in form phosphorylase a. AMP-binding positions include 43 to 45, Tyr76, and Arg310; that span reads DRN. An N6-succinyllysine modification is found at Lys364. At Lys470 the chain carries N6-acetyllysine. Ser524, Ser561, and Ser639 each carry phosphoserine. At Lys681 the chain carries N6-(pyridoxal phosphate)lysine. Lys796 carries the N6-acetyllysine modification.

It belongs to the glycogen phosphorylase family. In terms of assembly, homodimer; enzymatically active. Interacts with PPP1R3B; recruits the phosphatase PP1 which dephosphorylates and inactivates PYGL/glycogen phosphorylase. It depends on pyridoxal 5'-phosphate as a cofactor. In terms of processing, acetylation, which is up-regulated by glucose and insulin and down-regulated by glucagon, inhibits the glycogen phosphorylase activity by promoting PPP1R3B-mediated recruitment of phosphatase PP1 and Ser-15 dephosphorylation. Phosphorylation at Ser-15 converts inactive phosphorylase b into active phosphorylase a. Dephosphorylation of Ser-15 by phosphatase PP1 inactivates the enzyme.

It is found in the cytoplasm. Its subcellular location is the cytosol. The enzyme catalyses [(1-&gt;4)-alpha-D-glucosyl](n) + phosphate = [(1-&gt;4)-alpha-D-glucosyl](n-1) + alpha-D-glucose 1-phosphate. Allosterically regulated through the non-covalent binding of metabolites, being activated by AMP and inhibited by ATP, ADP, and glucose-6-phosphate. The activity is also controlled by post-translational modifications including phosphorylation and acetylation. Allosteric enzyme that catalyzes the rate-limiting step in glycogen catabolism, the phosphorolytic cleavage of glycogen to produce glucose-1-phosphate, and plays a central role in maintaining cellular and organismal glucose homeostasis. This Ovis aries (Sheep) protein is Glycogen phosphorylase, liver form.